The following is an 856-amino-acid chain: FO synthase (856 aa).

2 consecutive Radical SAM core domains span residues 84 to 336 (ISYS…APPN) and 544 to 785 (VTFV…SHIQ). Residues 85–417 (SYSRKVFIPV…PRVRGHVVAL (333 aa)) form a cofG-like region. [4Fe-4S] cluster is bound by residues C98, C102, C105, C558, C562, and C565. The cofH-like stretch occupies residues 521–854 (DGPALEAVAA…RQRTTTYALL (334 aa)).

This sequence in the N-terminal section; belongs to the radical SAM superfamily. CofG family. In the C-terminal section; belongs to the radical SAM superfamily. CofH family. [4Fe-4S] cluster serves as cofactor.

The enzyme catalyses 5-amino-6-(D-ribitylamino)uracil + L-tyrosine + S-adenosyl-L-methionine = 5-amino-5-(4-hydroxybenzyl)-6-(D-ribitylimino)-5,6-dihydrouracil + 2-iminoacetate + 5'-deoxyadenosine + L-methionine + H(+). It catalyses the reaction 5-amino-5-(4-hydroxybenzyl)-6-(D-ribitylimino)-5,6-dihydrouracil + S-adenosyl-L-methionine = 7,8-didemethyl-8-hydroxy-5-deazariboflavin + 5'-deoxyadenosine + L-methionine + NH4(+) + H(+). It participates in cofactor biosynthesis; coenzyme F0 biosynthesis. In terms of biological role, catalyzes the radical-mediated synthesis of 7,8-didemethyl-8-hydroxy-5-deazariboflavin (FO) from 5-amino-6-(D-ribitylamino)uracil and L-tyrosine. The protein is FO synthase (fbiC) of Mycobacterium bovis (strain ATCC BAA-935 / AF2122/97).